We begin with the raw amino-acid sequence, 311 residues long: CID domain-containing protein 1 (311 aa).

Positions 1–134 constitute a CID domain; it reads MSDFTEQTLR…RLQEAHQQMK (134 aa). A coiled-coil region spans residues 224 to 256; the sequence is MLEDYVKRLKEETKERESLETNLNMLIQNVRMS.

This is CID domain-containing protein 1 (cids-1) from Caenorhabditis briggsae.